Consider the following 926-residue polypeptide: Armadillo repeat-containing protein 5 (926 aa).

Positions 82–104 (PAPSQAASGSAPSSVASAGSTPG) are enriched in low complexity. The disordered stretch occupies residues 82 to 111 (PAPSQAASGSAPSSVASAGSTPGHAPAAES). ARM repeat units lie at residues 139 to 179 (GACR…NLAM), 181 to 221 (PESC…NLAD), 223 to 263 (PQHR…ELSR), 267 to 306 (RACAEQLSLGGALGPLVSLASHPKRAIREAAILILANLCA), 307 to 354 (QGLV…LCRE), 355 to 399 (AINR…DTGA), and 401 to 440 (GKLQALGLVPLLARQLCGEAGEEEEEGIEAASWDFPEERT). A Phosphoserine modification is found at Ser337. Residues 472 to 516 (WSPERCPMPEPSESVSPTPGQTSMSTPRTLRKPGRIPAATPEEPW) are disordered. Residues 484 to 499 (ESVSPTPGQTSMSTPR) show a composition bias toward polar residues. The BTB domain maps to 745–813 (PDLHFVLDSG…LHGCRGCGAA (69 aa)).

In terms of assembly, substrate-recognition component of the BCR(ARMC5) E3 ubiquitin ligase complex, at least composed of CUL3, ARMC5 and RBX1. In terms of processing, ubiquitinated by a BCR (BTB-CUL3-RBX1) E3 ubiquitin ligase complex, leading to its degradation. Deubiquitinated by USP7. In terms of tissue distribution, expression is high in the thymus, stomach, bone marrow and lymphatic tissues (including lymph nodes and intestinal wall). Also expressed in the adrenal gland, skin and in brain structures, with noticeable levels found in the cerebellum.

It is found in the nucleus. It localises to the chromosome. Its subcellular location is the cytoplasm. It participates in protein modification; protein ubiquitination. Its function is as follows. Substrate-recognition component of a BCR (BTB-CUL3-RBX1) E3 ubiquitin ligase complex that terminates RNA polymerase II (Pol II) transcription in the promoter-proximal region of genes. The BCR(ARMC5) complex provides a quality checkpoint during transcription elongation by driving premature transcription termination of transcripts that are unfavorably configured for transcriptional elongation: the BCR(ARMC5) complex acts by mediating ubiquitination of Pol II subunit POLR2A phosphorylated at 'Ser-5' of the C-terminal domain (CTD), leading to POLR2A degradation. The BCR(ARMC5) complex acts in parallel of the integrator complex and is specific for RNA Pol II originating from the promoter-proximal zone: it does not ubiquitinate elongation-stalled RNA Pol II. The BCR(ARMC5) complex also acts as a regulator of fatty acid desaturation by mediating ubiquitination and degradation of SCAP-free SREBF1 and SREBF2. Involved in fetal development, T-cell function and adrenal gland growth homeostasis. Plays a role in steroidogenesis, modulates steroidogenic enzymes expression and cortisol production. This chain is Armadillo repeat-containing protein 5, found in Mus musculus (Mouse).